Reading from the N-terminus, the 839-residue chain is Eukaryotic translation initiation factor 3 subunit C (839 aa).

The tract at residues 1-93 (MSRFFVAGYN…DSDSEDEGRR (93 aa)) is disordered. Composition is skewed to acidic residues over residues 14–27 (SSEEEDLLSSDEEL) and 34–58 (GEQETSDDDSLDFDDQSDSDSSDSD). The PCI domain occupies 585–759 (FHQHINLELL…AFIQFASTEP (175 aa)). The interval 783-839 (EKTSSNGYGKKQPQQQQQQQQQQQQQQQQQKDLLQEDNSRFRYANVNTNNDEFQTTA) is disordered. The segment covering 794-812 (QPQQQQQQQQQQQQQQQQQ) has biased composition (low complexity). Over residues 827 to 839 (NVNTNNDEFQTTA) the composition is skewed to polar residues.

This sequence belongs to the eIF-3 subunit C family. As to quaternary structure, component of the eukaryotic translation initiation factor 3 (eIF-3) complex.

Its subcellular location is the cytoplasm. Its function is as follows. Component of the eukaryotic translation initiation factor 3 (eIF-3) complex, which is involved in protein synthesis of a specialized repertoire of mRNAs and, together with other initiation factors, stimulates binding of mRNA and methionyl-tRNAi to the 40S ribosome. The eIF-3 complex specifically targets and initiates translation of a subset of mRNAs involved in cell proliferation. In Scheffersomyces stipitis (strain ATCC 58785 / CBS 6054 / NBRC 10063 / NRRL Y-11545) (Yeast), this protein is Eukaryotic translation initiation factor 3 subunit C.